The following is a 477-amino-acid chain: Metallopeptidase AprA (477 aa).

The N-terminal stretch at 1–20 is a signal peptide; it reads MSKAKDKAIVSAAQASTAYS. Zn(2+) is bound at residue His183. Residue Glu184 is part of the active site. Zn(2+)-binding residues include His187 and His193. Ca(2+) is bound by residues Arg264, Gly266, Thr268, Asp296, Gly298, Gly299, Asp301, Thr338, Glu340, Gly345, Gly347, Asp349, Asn354, Ala356, Asn358, Gly362, Gly363, Ala364, Gly365, Asp367, Gly371, Ala372, Gly373, Gly374, Asp376, Gly380, Gly381, Ala382, Gly383, Asp385, Asp394, Asp401, Asp411, Asp453, Ser455, and Asp461. Hemolysin-type calcium-binding repeat units lie at residues 343–360, 361–378, and 379–391; these read FGGA…ANVI, KGGA…ADQL, and WGGA…VFGA.

This sequence belongs to the peptidase M10B family. Requires Ca(2+) as cofactor. Zn(2+) serves as cofactor.

The protein resides in the secreted. Its activity is regulated as follows. Is completely inhibited by the metal cation chelators 1,10-phenanthroline and EDTA, but PMSF, pepstatin A and E-64 have no effect on activity. In terms of biological role, peptidase able to cleave azocasein and the milk substrates beta-casein and Na-caseinate. Can withstand UHT processing of milk, and is able to spoil UHT milk over the storage period. In Pseudomonas marginalis (Pseudomonas panacis), this protein is Metallopeptidase AprA.